We begin with the raw amino-acid sequence, 82 residues long: UPF0213 protein SSP2268 (82 aa).

Positions 2-77 constitute a GIY-YIG domain; it reads DKHYIYIVKC…KTFSRQKKLK (76 aa).

It belongs to the UPF0213 family.

This chain is UPF0213 protein SSP2268, found in Staphylococcus saprophyticus subsp. saprophyticus (strain ATCC 15305 / DSM 20229 / NCIMB 8711 / NCTC 7292 / S-41).